The following is a 450-amino-acid chain: UDP-N-acetylmuramoylalanine--D-glutamate ligase (450 aa).

Gly-115–Thr-121 serves as a coordination point for ATP.

The protein belongs to the MurCDEF family.

It localises to the cytoplasm. It carries out the reaction UDP-N-acetyl-alpha-D-muramoyl-L-alanine + D-glutamate + ATP = UDP-N-acetyl-alpha-D-muramoyl-L-alanyl-D-glutamate + ADP + phosphate + H(+). It participates in cell wall biogenesis; peptidoglycan biosynthesis. Cell wall formation. Catalyzes the addition of glutamate to the nucleotide precursor UDP-N-acetylmuramoyl-L-alanine (UMA). The chain is UDP-N-acetylmuramoylalanine--D-glutamate ligase from Desulfatibacillum aliphaticivorans.